We begin with the raw amino-acid sequence, 227 residues long: Cytochrome c biogenesis ATP-binding export protein CcmA (227 aa).

One can recognise an ABC transporter domain in the interval 26-227 (LAASGLGFSR…ARTLRLDARS (202 aa)). Residue 58–65 (GANGSGKT) coordinates ATP.

Belongs to the ABC transporter superfamily. CcmA exporter (TC 3.A.1.107) family. As to quaternary structure, the complex is composed of two ATP-binding proteins (CcmA) and two transmembrane proteins (CcmB).

The protein resides in the cell inner membrane. It catalyses the reaction heme b(in) + ATP + H2O = heme b(out) + ADP + phosphate + H(+). Part of the ABC transporter complex CcmAB involved in the biogenesis of c-type cytochromes; once thought to export heme, this seems not to be the case, but its exact role is uncertain. Responsible for energy coupling to the transport system. This is Cytochrome c biogenesis ATP-binding export protein CcmA from Cupriavidus necator (strain ATCC 17699 / DSM 428 / KCTC 22496 / NCIMB 10442 / H16 / Stanier 337) (Ralstonia eutropha).